We begin with the raw amino-acid sequence, 514 residues long: MTDKLIIFDTTLRDGEQSPGASMTKEEKIRIAKHLERMKVDVIEAGFAASSNGDFDAIHTIAGLVKDSTVCSLARANDKDIQRAADALKPANSFRIHTFIATSPLHMEKKLRMTPEQVYEQARLAVRFARKFTDNVEFSPEDGSRSDMDFLCRVLEGVIAEGATTINITDTVGYGVPEMYGNLVKTLRERIPNSDKAIFSVHCHNDLGMAVANSLAGVMIGGARQVECTINGLGERAGNTSLEEIVMAVKTRKDYFGLDVGIDTTQIVPTSKLVSQITGFVVQPNKAVVGANAFAHASGIHQDGVLKARDTYEIMRAEDVGWTANKIVLGKLSGRNAFKQRLQELGVSLDSEAELNAAFMRFKDLADRKSEIFDEDIIAIVSQESALAQEQEHFKFVSLSQHSETGEQPHAKVVFSVDGKEVTGEARGNGPVDATLNAIESEVGSGSELLLYSVNAITTGTQAQGEVTVRLSKSGRIVNGVGTDPDIVAASAKAYIAALNKLHSKDDKLNPQRS.

The 264-residue stretch at 5–268 (LIIFDTTLRD…DVGIDTTQIV (264 aa)) folds into the Pyruvate carboxyltransferase domain. The Mn(2+) site is built by D14, H202, H204, and N239. A regulatory domain region spans residues 395–514 (KFVSLSQHSE…KDDKLNPQRS (120 aa)).

It belongs to the alpha-IPM synthase/homocitrate synthase family. LeuA type 1 subfamily. In terms of assembly, homodimer. Mn(2+) serves as cofactor.

The protein resides in the cytoplasm. It catalyses the reaction 3-methyl-2-oxobutanoate + acetyl-CoA + H2O = (2S)-2-isopropylmalate + CoA + H(+). It participates in amino-acid biosynthesis; L-leucine biosynthesis; L-leucine from 3-methyl-2-oxobutanoate: step 1/4. Catalyzes the condensation of the acetyl group of acetyl-CoA with 3-methyl-2-oxobutanoate (2-ketoisovalerate) to form 3-carboxy-3-hydroxy-4-methylpentanoate (2-isopropylmalate). The polypeptide is 2-isopropylmalate synthase (Burkholderia multivorans (strain ATCC 17616 / 249)).